The sequence spans 445 residues: Exodeoxyribonuclease 7 large subunit (445 aa).

The protein belongs to the XseA family. As to quaternary structure, heterooligomer composed of large and small subunits.

It localises to the cytoplasm. The catalysed reaction is Exonucleolytic cleavage in either 5'- to 3'- or 3'- to 5'-direction to yield nucleoside 5'-phosphates.. In terms of biological role, bidirectionally degrades single-stranded DNA into large acid-insoluble oligonucleotides, which are then degraded further into small acid-soluble oligonucleotides. This chain is Exodeoxyribonuclease 7 large subunit, found in Xanthomonas oryzae pv. oryzae (strain KACC10331 / KXO85).